We begin with the raw amino-acid sequence, 729 residues long: Polyribonucleotide nucleotidyltransferase (729 aa).

The disordered stretch occupies residues 399 to 419 (YMHNYNFPPYSTGETGRVGSP). Mg(2+) contacts are provided by D509 and D515. Positions 575-634 (PRVISVKIPVDKIGEVIGPKGKMINQIQADSGAEITVEDDGTIYIGAADGPAAETARSAI) constitute a KH domain. The 73-residue stretch at 646–718 (GERYLGTIVK…ARGKISLAPG (73 aa)) folds into the S1 motif domain.

The protein belongs to the polyribonucleotide nucleotidyltransferase family. The cofactor is Mg(2+).

It localises to the cytoplasm. The catalysed reaction is RNA(n+1) + phosphate = RNA(n) + a ribonucleoside 5'-diphosphate. Functionally, involved in mRNA degradation. Catalyzes the phosphorolysis of single-stranded polyribonucleotides processively in the 3'- to 5'-direction. The sequence is that of Polyribonucleotide nucleotidyltransferase from Parafrankia sp. (strain EAN1pec).